Here is a 337-residue protein sequence, read N- to C-terminus: Visual pigment-like receptor peropsin (337 aa).

The Extracellular portion of the chain corresponds to 1-26; sequence MLRNNLGNSSDSKNEDGSVFSQTEHN. N-linked (GlcNAc...) asparagine glycosylation occurs at Asn-8. The chain crosses the membrane as a helical span at residues 27 to 49; the sequence is IVATYLIMAGMISIISNIIVLGI. At 50–61 the chain is on the cytoplasmic side; the sequence is FIKYKELRTPTN. A helical transmembrane segment spans residues 62 to 87; the sequence is AIIINLAVTDIGVSSIGYPMSAASDL. Residues 88–101 lie on the Extracellular side of the membrane; it reads YGSWKFGYAGCQVY. Residues Cys-98 and Cys-175 are joined by a disulfide bond. The chain crosses the membrane as a helical span at residues 102–121; it reads AGLNIFFGMASIGLLTVVAV. Residues 122 to 140 are Cytoplasmic-facing; sequence DRYLTICLPDVGRRMTTNT. The chain crosses the membrane as a helical span at residues 141-164; sequence YIGLILGAWINGLFWALMPIIGWA. Residues 165–188 lie on the Extracellular side of the membrane; sequence SYAPDPTGATCTINWRKNDRSFVS. The helical transmembrane segment at 189–212 threads the bilayer; sequence YTMTVIAINFIVPLTVMFYCYYHV. The Cytoplasmic segment spans residues 213-240; sequence TLSIKHHTTSDCTESLNRDWSDQIDVTK. The chain crosses the membrane as a helical span at residues 241–264; it reads MSVIMICMFLVAWSPYSIVCLWAS. The Extracellular portion of the chain corresponds to 265–272; it reads FGDPKKIP. A helical membrane pass occupies residues 273–297; that stretch reads PPMAIIAPLFAKSSTFYNPCIYVVA. Lys-284 is modified (N6-(retinylidene)lysine). The Cytoplasmic portion of the chain corresponds to 298–337; sequence NKKFRRAMLAMFKCQTHQTMPVTSILPMDVSQNPLASGRI.

Belongs to the G-protein coupled receptor 1 family. Opsin subfamily. As to expression, found only in the eye, where it is localized to the retinal pigment epithelium (RPE). In the RPE, it is localized to the microvilli that surround the photoreceptor outer segments.

It is found in the membrane. In terms of biological role, may play a role in rpe physiology either by detecting light directly or by monitoring the concentration of retinoids or other photoreceptor-derived compounds. In Homo sapiens (Human), this protein is Visual pigment-like receptor peropsin (RRH).